Consider the following 536-residue polypeptide: Prickle planar cell polarity protein 3-B (536 aa).

In terms of domain architecture, PET spans 66-175 (SGSQRDSLCD…CVRPISGTMS (110 aa)). 3 consecutive LIM zinc-binding domains span residues 177–241 (TVCQ…ELKR), 242–302 (PRCL…LYAQ), and 305–366 (DSCG…HTKS). Residues 418-536 (PTQAAPARSL…KKKDKSCFLS (119 aa)) form a disordered region. The span at 438 to 448 (FSRECPNRRSL) shows a compositional bias: basic and acidic residues. Residues 450–467 (DLSSHTRTPTRVTFQLPS) are compositionally biased toward polar residues. Low complexity predominate over residues 474–487 (SISFSRPSFTSSSS).

This sequence belongs to the prickle / espinas / testin family. As to quaternary structure, interacts with vangl2 via its C-terminus. The vangl2-dependent membrane recruitment of prickle3 is a prerequisite for its polarization. Interacts with wtip. Wtip is involved in the recruitment of prickle3 to the basal body.

The protein resides in the cytoplasm. It is found in the cell membrane. The protein localises to the mitochondrion. Involved in the planar cell polarity (PCP) pathway that is essential for the polarization of epithelial cells during morphogenetic processes, including gastrulation and neurulation. PCP is maintained by two molecular modules, the global and the core modules. Proteins of the core module include the proteins Frizzled (Fz), Disheveled (Dsh), Van Gogh (Vang), Prickle (Pk), Flamingo (Fmi, Celsr) and Diego (Dgo). The core module proteins develop subcellular asymmetry, accumulating in two groups on opposite sides of epithelial cells. Distinct proximal (Vang, Pk and Fmi) and distal (Fz, Dsh, Dgo and Fmi) complexes segregate to opposite sides of the cell, where they interact with the opposite complex in the neighboring cell at or near the adherents junctions. Directional information to orient polarization with respect to the tissue axes is provided by the global module which involves Wnt proteins. Involved in the organization of the basal body. Involved in cilia growth and positioning. Required for proper assembly, stability, and function of mitochondrial membrane ATP synthase (mitochondrial complex V). The protein is Prickle planar cell polarity protein 3-B (prickle3-b) of Xenopus laevis (African clawed frog).